The sequence spans 495 residues: Lysine--tRNA ligase (495 aa).

The Mg(2+) site is built by E406 and E413.

It belongs to the class-II aminoacyl-tRNA synthetase family. Homodimer. Requires Mg(2+) as cofactor.

Its subcellular location is the cytoplasm. The catalysed reaction is tRNA(Lys) + L-lysine + ATP = L-lysyl-tRNA(Lys) + AMP + diphosphate. In Staphylococcus epidermidis (strain ATCC 35984 / DSM 28319 / BCRC 17069 / CCUG 31568 / BM 3577 / RP62A), this protein is Lysine--tRNA ligase.